Here is a 110-residue protein sequence, read N- to C-terminus: Protein SPIRAL1-like 2 (110 aa).

Positions 28-110 are disordered; the sequence is AVNKTPAETE…LDYLFGGGSN (83 aa). Residues 40–52 are compositionally biased toward low complexity; sequence AHAPPTQAAAANA. Over residues 63–82 the composition is skewed to polar residues; that stretch reads LNSNSANNYMRAEGQNTGNF. Position 67 is a phosphoserine (Ser-67). The span at 95-110 shows a compositional bias: gly residues; the sequence is PGGGSSLDYLFGGGSN.

The protein belongs to the SPIRAL1 family. In terms of tissue distribution, ubiquitous.

Its function is as follows. Acts redundantly with SPR1 in maintaining the cortical microtubules organization essential for anisotropic cell growth. The polypeptide is Protein SPIRAL1-like 2 (SP1L2) (Arabidopsis thaliana (Mouse-ear cress)).